A 474-amino-acid chain; its full sequence is 3-isopropylmalate dehydratase large subunit (474 aa).

[4Fe-4S] cluster is bound by residues cysteine 353, cysteine 414, and cysteine 417.

The protein belongs to the aconitase/IPM isomerase family. LeuC type 1 subfamily. In terms of assembly, heterodimer of LeuC and LeuD. [4Fe-4S] cluster serves as cofactor.

The catalysed reaction is (2R,3S)-3-isopropylmalate = (2S)-2-isopropylmalate. It participates in amino-acid biosynthesis; L-leucine biosynthesis; L-leucine from 3-methyl-2-oxobutanoate: step 2/4. Functionally, catalyzes the isomerization between 2-isopropylmalate and 3-isopropylmalate, via the formation of 2-isopropylmaleate. This chain is 3-isopropylmalate dehydratase large subunit, found in Xylella fastidiosa (strain M23).